The chain runs to 204 residues: Holliday junction branch migration complex subunit RuvA (204 aa).

The segment at 1–63 is domain I; that stretch reads MIASLRGTVI…EDAMKLYGFI (63 aa). A domain II region spans residues 64-142; sequence DDQSREMFAL…AYTVGVVDDG (79 aa). Positions 143-151 are flexible linker; sequence APTAPTQGV. Residues 152–204 are domain III; that stretch reads APVVVVDQVTQALTGLGFTEKQADDAVAAVLSADPGLDTSAALRAALAKLGGK.

The protein belongs to the RuvA family. In terms of assembly, homotetramer. Forms an RuvA(8)-RuvB(12)-Holliday junction (HJ) complex. HJ DNA is sandwiched between 2 RuvA tetramers; dsDNA enters through RuvA and exits via RuvB. An RuvB hexamer assembles on each DNA strand where it exits the tetramer. Each RuvB hexamer is contacted by two RuvA subunits (via domain III) on 2 adjacent RuvB subunits; this complex drives branch migration. In the full resolvosome a probable DNA-RuvA(4)-RuvB(12)-RuvC(2) complex forms which resolves the HJ.

It is found in the cytoplasm. Functionally, the RuvA-RuvB-RuvC complex processes Holliday junction (HJ) DNA during genetic recombination and DNA repair, while the RuvA-RuvB complex plays an important role in the rescue of blocked DNA replication forks via replication fork reversal (RFR). RuvA specifically binds to HJ cruciform DNA, conferring on it an open structure. The RuvB hexamer acts as an ATP-dependent pump, pulling dsDNA into and through the RuvAB complex. HJ branch migration allows RuvC to scan DNA until it finds its consensus sequence, where it cleaves and resolves the cruciform DNA. The sequence is that of Holliday junction branch migration complex subunit RuvA from Corynebacterium efficiens (strain DSM 44549 / YS-314 / AJ 12310 / JCM 11189 / NBRC 100395).